The primary structure comprises 104 residues: Urease subunit beta (104 aa).

The protein belongs to the urease beta subunit family. In terms of assembly, heterotrimer of UreA (gamma), UreB (beta) and UreC (alpha) subunits. Three heterotrimers associate to form the active enzyme.

The protein localises to the cytoplasm. It carries out the reaction urea + 2 H2O + H(+) = hydrogencarbonate + 2 NH4(+). Its pathway is nitrogen metabolism; urea degradation; CO(2) and NH(3) from urea (urease route): step 1/1. The chain is Urease subunit beta from Rhodopseudomonas palustris (strain BisB18).